The chain runs to 376 residues: Probable ureide permease A3 (376 aa).

Topologically, residues 1–9 (HLVESKGGA) are extracellular. Residues 10 to 30 (IACMFLALFFLGTWPALLTML) form a helical membrane-spanning segment. Residues 31–41 (ERRGRLPQHTY) are Cytoplasmic-facing. The helical transmembrane segment at 42–62 (LDYSITNFFAALLIAFTFGEI) threads the bilayer. The Extracellular portion of the chain corresponds to 63–80 (GKGKPDEPNFLAQLAQDN). The chain crosses the membrane as a helical span at residues 81 to 101 (WPSVLFAMGGGVVLSLGNLSS). At 102 to 103 (QY) the chain is on the cytoplasmic side. The helical transmembrane segment at 104–124 (AFAFVGLSVTEVITASITVVI) threads the bilayer. Topologically, residues 125–137 (GTTLNYFLDDKIN) are extracellular. A helical membrane pass occupies residues 138 to 158 (KAEILFPGVGCFLIAVFLGFC). The Cytoplasmic portion of the chain corresponds to 159–231 (RFNSSNASDN…RAIKVFGKST (73 aa)). Residue 223–230 (AIKVFGKS) coordinates ATP. A helical transmembrane segment spans residues 232-252 (LIGLALTFSAGLCFSMFSPAF). At 253-274 (NLATNDQWHTLPNGIPHLTVYT) the chain is on the extracellular side. The chain crosses the membrane as a helical span at residues 275-295 (AFFYFSISCFVIAIILNITFL). At 296–317 (YHPVLNLPKSSLKAYLADSDGR) the chain is on the cytoplasmic side. Residues 318–338 (IWALLAGLLCGFGNSLQFMGG) form a helical membrane-spanning segment. At 339 to 376 (QAAGYQQQSLCRHFLCKHFWGVLLFGEYRRSSRKTYIC) the chain is on the extracellular side.

Belongs to the plant ureide permease (TC 2.A.7.19) family.

Its subcellular location is the membrane. Its function is as follows. Transports a wide spectrum of oxo derivatives of heterocyclic nitrogen compounds. The sequence is that of Probable ureide permease A3 (A3) from Vigna unguiculata (Cowpea).